Consider the following 242-residue polypeptide: ATP synthase subunit a (242 aa).

Helical transmembrane passes span 29–49 (SSIY…LAFY), 84–104 (FIPL…LGMT), 114–134 (IIVT…VGFV), 140–160 (FLTL…MIVI), 181–201 (MAGH…MIYL), and 203–223 (FLPI…AILQ).

This sequence belongs to the ATPase A chain family. As to quaternary structure, F-type ATPases have 2 components, CF(1) - the catalytic core - and CF(0) - the membrane proton channel. CF(1) has five subunits: alpha(3), beta(3), gamma(1), delta(1), epsilon(1). CF(0) has three main subunits: a(1), b(2) and c(9-12). The alpha and beta chains form an alternating ring which encloses part of the gamma chain. CF(1) is attached to CF(0) by a central stalk formed by the gamma and epsilon chains, while a peripheral stalk is formed by the delta and b chains.

The protein resides in the cell inner membrane. Functionally, key component of the proton channel; it plays a direct role in the translocation of protons across the membrane. The chain is ATP synthase subunit a from Rickettsia rickettsii (strain Sheila Smith).